The following is a 182-amino-acid chain: Bifunctional protein PyrR (182 aa).

The short motif at 98–110 is the PRPP-binding element; the sequence is VVLVDDVLFTGRS.

It belongs to the purine/pyrimidine phosphoribosyltransferase family. PyrR subfamily.

The catalysed reaction is UMP + diphosphate = 5-phospho-alpha-D-ribose 1-diphosphate + uracil. Regulates the transcription of the pyrimidine nucleotide (pyr) operon in response to exogenous pyrimidines. Functionally, also displays a weak uracil phosphoribosyltransferase activity which is not physiologically significant. This chain is Bifunctional protein PyrR, found in Dehalococcoides mccartyi (strain ATCC BAA-2100 / JCM 16839 / KCTC 5957 / BAV1).